The primary structure comprises 370 residues: 5-hydroxytryptamine receptor 5B (370 aa).

The interval 1-36 is disordered; that stretch reads MEVSNLSGATPGIAFPPGPESCSDSPSSGRSMGSTP. The Extracellular portion of the chain corresponds to 1–48; that stretch reads MEVSNLSGATPGIAFPPGPESCSDSPSSGRSMGSTPGGLILSGREPPF. N-linked (GlcNAc...) asparagine glycosylation is present at Asn-5. Residues 20–36 are compositionally biased toward low complexity; it reads ESCSDSPSSGRSMGSTP. Residues 49–75 form a helical membrane-spanning segment; it reads SAFTVLVVTLLVLLIAATFLWNLLVLV. The Cytoplasmic portion of the chain corresponds to 76–88; the sequence is TILRVRAFHRVPH. A helical transmembrane segment spans residues 89–115; sequence NLVASTAVSDVLVAALVMPLSLVSELS. The Extracellular portion of the chain corresponds to 116-127; sequence AGRRWQLGRSLC. Cysteines 127 and 205 form a disulfide. A helical membrane pass occupies residues 128–150; it reads HVWISFDVLCCTASIWNVAAIAL. Asp-134 is a binding site for serotonin. Over 151–168 the chain is Cytoplasmic; that stretch reads DRYWTITRHLQYTLRTRR. A helical membrane pass occupies residues 169–189; the sequence is RASALMIAITWALSALIALAP. The Extracellular segment spans residues 190–211; sequence LLFGWGEAYDARLQRCQVSQEP. Residues 212 to 233 traverse the membrane as a helical segment; it reads SYAVFSTCGAFYVPLAVVLFVY. Over 234-300 the chain is Cytoplasmic; that stretch reads WKIYKAAKFR…QKEKRAAMMV (67 aa). A helical membrane pass occupies residues 301-325; it reads GILIGVFVLCWIPFFLTELVSPLCA. Residues 326 to 327 lie on the Extracellular side of the membrane; it reads CS. The helical transmembrane segment at 328 to 352 threads the bilayer; it reads LPPIWKSIFLWLGYSNSFFNPLIYT. Over 353–370 the chain is Cytoplasmic; the sequence is AFNKNYNNAFKSLFTKQR.

The protein belongs to the G-protein coupled receptor 1 family. As to expression, brain; in the CA1 region of hippocampus, the medial habenula, and raphe nuclei.

The protein resides in the cell membrane. In terms of biological role, G-protein coupled receptor for 5-hydroxytryptamine (serotonin), a biogenic hormone that functions as a neurotransmitter, a hormone and a mitogen. Also functions as a receptor for ergot alkaloid derivatives and other psychoactive substances. Ligand binding causes a conformation change that triggers signaling via guanine nucleotide-binding proteins (G proteins) and modulates the activity of downstream effectors. Htr5b is coupled to G(i)/G(o) G alpha proteins and mediates inhibitory neurotransmission: signaling inhibits adenylate cyclase activity and activates a phosphatidylinositol-calcium second messenger system that regulates the release of Ca(2+) ions from intracellular stores. In Rattus norvegicus (Rat), this protein is 5-hydroxytryptamine receptor 5B.